Here is a 306-residue protein sequence, read N- to C-terminus: Pantothenate kinase (306 aa).

Residue 91–98 (GSVAVGKS) coordinates ATP.

This sequence belongs to the prokaryotic pantothenate kinase family.

The protein resides in the cytoplasm. It carries out the reaction (R)-pantothenate + ATP = (R)-4'-phosphopantothenate + ADP + H(+). It participates in cofactor biosynthesis; coenzyme A biosynthesis; CoA from (R)-pantothenate: step 1/5. The protein is Pantothenate kinase of Streptococcus pyogenes serotype M12 (strain MGAS2096).